Reading from the N-terminus, the 120-residue chain is MKKLTKTHSHRQQKLASIINEALIEILRRGKMLDTRLFDCPLTITKVIVTADLKIANCYFLPFNTKLTIDEIMDALNNSKNAIRNFITNKINMKFSPDIRFYYDHGFDNAIKVAHLLKDL.

The protein belongs to the RbfA family. Monomer. Binds 30S ribosomal subunits, but not 50S ribosomal subunits or 70S ribosomes.

The protein resides in the cytoplasm. Functionally, one of several proteins that assist in the late maturation steps of the functional core of the 30S ribosomal subunit. Associates with free 30S ribosomal subunits (but not with 30S subunits that are part of 70S ribosomes or polysomes). Required for efficient processing of 16S rRNA. May interact with the 5'-terminal helix region of 16S rRNA. This chain is Ribosome-binding factor A, found in Rickettsia africae (strain ESF-5).